Here is a 141-residue protein sequence, read N- to C-terminus: 3-hydroxyacyl-[acyl-carrier-protein] dehydratase FabZ (141 aa).

Residue His48 is part of the active site.

Belongs to the thioester dehydratase family. FabZ subfamily.

Its subcellular location is the cytoplasm. It carries out the reaction a (3R)-hydroxyacyl-[ACP] = a (2E)-enoyl-[ACP] + H2O. In terms of biological role, involved in unsaturated fatty acids biosynthesis. Catalyzes the dehydration of short chain beta-hydroxyacyl-ACPs and long chain saturated and unsaturated beta-hydroxyacyl-ACPs. This chain is 3-hydroxyacyl-[acyl-carrier-protein] dehydratase FabZ, found in Herpetosiphon aurantiacus (strain ATCC 23779 / DSM 785 / 114-95).